The chain runs to 213 residues: Superoxide dismutase [Fe] (213 aa).

Fe cation is bound by residues His26, His73, Asp156, and His160.

It belongs to the iron/manganese superoxide dismutase family. Homodimer. Fe cation serves as cofactor.

It catalyses the reaction 2 superoxide + 2 H(+) = H2O2 + O2. In terms of biological role, destroys superoxide anion radicals which are normally produced within the cells and which are toxic to biological systems. The chain is Superoxide dismutase [Fe] (sodB) from Helicobacter pylori (strain ATCC 700392 / 26695) (Campylobacter pylori).